A 198-amino-acid chain; its full sequence is Protein hunchback (198 aa).

Disordered regions lie at residues 16–117 (SHHH…PMQS) and 152–198 (NDKL…KYMA). Residues 17–31 (HHHHHHHAHHSHHQH) show a composition bias toward basic residues. Low complexity-rich tracts occupy residues 35–46 (SNSNSNASSPHQ) and 68–83 (QQQQ…QQQQ). Polar residues predominate over residues 95-105 (PSPSNNDQNSP). Residues 179 to 198 (EPEKEHDLMSNSSEDMKYMA) show a composition bias toward basic and acidic residues.

Belongs to the hunchback C2H2-type zinc-finger protein family.

The protein resides in the nucleus. In terms of biological role, gap class segmentation protein that controls development of head structures. The chain is Protein hunchback (hb) from Drosophila disjuncta (Fruit fly).